Reading from the N-terminus, the 430-residue chain is Cytochrome c biogenesis protein CcsB (430 aa).

A run of 3 helical transmembrane segments spans residues 14–34 (LRIA…GTAI), 72–92 (SSWF…CSWR), and 162–182 (AGPM…VWGS).

This sequence belongs to the Ccs1/CcsB family. May interact with CcsA.

It localises to the cellular thylakoid membrane. In terms of biological role, required during biogenesis of c-type cytochromes (cytochrome c6 and cytochrome f) at the step of heme attachment. The sequence is that of Cytochrome c biogenesis protein CcsB from Prochlorococcus marinus (strain MIT 9313).